A 378-amino-acid chain; its full sequence is Putative glycosyltransferase ORF378 (378 aa).

It belongs to the glycosyltransferase group 1 family. Glycosyltransferase 4 subfamily.

The sequence is that of Putative glycosyltransferase ORF378 from Acidianus sp. F28 (AFV-2).